Consider the following 157-residue polypeptide: Endoribonuclease YbeY (157 aa).

Residues His-111, His-115, and His-121 each contribute to the Zn(2+) site.

Belongs to the endoribonuclease YbeY family. Requires Zn(2+) as cofactor.

Its subcellular location is the cytoplasm. Single strand-specific metallo-endoribonuclease involved in late-stage 70S ribosome quality control and in maturation of the 3' terminus of the 16S rRNA. This Pseudomonas putida (strain W619) protein is Endoribonuclease YbeY.